The primary structure comprises 204 residues: Auxin-binding protein 4 (204 aa).

The N-terminal stretch at 1–41 (MVRRRPATGAAPRPHLAAVGRGLLLASVLAAAASSLPVAES) is a signal peptide. The cysteines at positions 43 and 196 are disulfide-linked. Zn(2+) is bound by residues His-98, His-100, and Glu-104. Asn-136 carries N-linked (GlcNAc...) asparagine glycosylation. His-147 serves as a coordination point for Zn(2+). Positions 201 to 204 (KDEL) match the Prevents secretion from ER motif.

In terms of assembly, homodimer.

It localises to the endoplasmic reticulum lumen. This is probably a receptor for the plant hormone auxin. The sequence is that of Auxin-binding protein 4 (ABP4) from Zea mays (Maize).